Here is a 529-residue protein sequence, read N- to C-terminus: Peptide chain release factor 3 (529 aa).

Residues Ala-11–Met-280 enclose the tr-type G domain. GTP-binding positions include Ser-20–Thr-27, Asp-88–His-92, and Asn-142–Asp-145.

Belongs to the TRAFAC class translation factor GTPase superfamily. Classic translation factor GTPase family. PrfC subfamily.

It is found in the cytoplasm. In terms of biological role, increases the formation of ribosomal termination complexes and stimulates activities of RF-1 and RF-2. It binds guanine nucleotides and has strong preference for UGA stop codons. It may interact directly with the ribosome. The stimulation of RF-1 and RF-2 is significantly reduced by GTP and GDP, but not by GMP. The sequence is that of Peptide chain release factor 3 from Shigella flexneri.